Consider the following 725-residue polypeptide: 1,4-alpha-glucan branching enzyme GlgB (725 aa).

Asp-403 functions as the Nucleophile in the catalytic mechanism. Residue Glu-456 is the Proton donor of the active site.

Belongs to the glycosyl hydrolase 13 family. GlgB subfamily. In terms of assembly, monomer.

The enzyme catalyses Transfers a segment of a (1-&gt;4)-alpha-D-glucan chain to a primary hydroxy group in a similar glucan chain.. The protein operates within glycan biosynthesis; glycogen biosynthesis. Its function is as follows. Catalyzes the formation of the alpha-1,6-glucosidic linkages in glycogen by scission of a 1,4-alpha-linked oligosaccharide from growing alpha-1,4-glucan chains and the subsequent attachment of the oligosaccharide to the alpha-1,6 position. The polypeptide is 1,4-alpha-glucan branching enzyme GlgB (Pectobacterium atrosepticum (strain SCRI 1043 / ATCC BAA-672) (Erwinia carotovora subsp. atroseptica)).